We begin with the raw amino-acid sequence, 237 residues long: Large ribosomal subunit protein uL1 (237 aa).

It belongs to the universal ribosomal protein uL1 family. As to quaternary structure, part of the 50S ribosomal subunit.

In terms of biological role, binds directly to 23S rRNA. The L1 stalk is quite mobile in the ribosome, and is involved in E site tRNA release. Functionally, protein L1 is also a translational repressor protein, it controls the translation of the L11 operon by binding to its mRNA. This is Large ribosomal subunit protein uL1 from Myxococcus xanthus (strain DK1622).